Consider the following 254-residue polypeptide: 3-deoxy-manno-octulosonate cytidylyltransferase (254 aa).

The protein belongs to the KdsB family.

The protein localises to the cytoplasm. The catalysed reaction is 3-deoxy-alpha-D-manno-oct-2-ulosonate + CTP = CMP-3-deoxy-beta-D-manno-octulosonate + diphosphate. It participates in nucleotide-sugar biosynthesis; CMP-3-deoxy-D-manno-octulosonate biosynthesis; CMP-3-deoxy-D-manno-octulosonate from 3-deoxy-D-manno-octulosonate and CTP: step 1/1. The protein operates within bacterial outer membrane biogenesis; lipopolysaccharide biosynthesis. In terms of biological role, activates KDO (a required 8-carbon sugar) for incorporation into bacterial lipopolysaccharide in Gram-negative bacteria. This is 3-deoxy-manno-octulosonate cytidylyltransferase from Polynucleobacter asymbioticus (strain DSM 18221 / CIP 109841 / QLW-P1DMWA-1) (Polynucleobacter necessarius subsp. asymbioticus).